Here is a 92-residue protein sequence, read N- to C-terminus: PqqA binding protein (92 aa).

Belongs to the PqqD family. In terms of assembly, monomer. Interacts with PqqE.

Its pathway is cofactor biosynthesis; pyrroloquinoline quinone biosynthesis. Functionally, functions as a PqqA binding protein and presents PqqA to PqqE, in the pyrroloquinoline quinone (PQQ) biosynthetic pathway. The polypeptide is PqqA binding protein (Xanthomonas campestris pv. campestris (strain B100)).